Reading from the N-terminus, the 118-residue chain is ATP synthase subunit g, mitochondrial (118 aa).

The protein belongs to the ATPase g subunit family. As to quaternary structure, F-type ATPases have 2 components, CF(1) - the catalytic core - and CF(0) - the membrane proton channel.

The protein localises to the mitochondrion membrane. In terms of biological role, mitochondrial membrane ATP synthase (F(1)F(0) ATP synthase or Complex V) produces ATP from ADP in the presence of a proton gradient across the membrane which is generated by electron transport complexes of the respiratory chain. F-type ATPases consist of two structural domains, F(1) - containing the extramembraneous catalytic core, and F(0) - containing the membrane proton channel, linked together by a central stalk and a peripheral stalk. During catalysis, ATP synthesis in the catalytic domain of F(1) is coupled via a rotary mechanism of the central stalk subunits to proton translocation. Part of the complex F(0) domain. Minor subunit located with subunit a in the membrane. In Schizosaccharomyces pombe (strain 972 / ATCC 24843) (Fission yeast), this protein is ATP synthase subunit g, mitochondrial (atp20).